The sequence spans 302 residues: Epoxyqueuosine reductase (302 aa).

D128 (proton donor) is an active-site residue. The 4Fe-4S ferredoxin-type 1 domain occupies 170–202 (LPLQADGPIRDYCGTCTACIDACPTDAITPYEV). C182, C185, C188, C192, C207, C234, C237, and C241 together coordinate [4Fe-4S] cluster. The 31-residue stretch at 221–251 (NEFKGKMENWIFGCDICQDVCPWNSFARPHS) folds into the 4Fe-4S ferredoxin-type 2 domain.

The protein belongs to the QueG family. Monomer. It depends on cob(II)alamin as a cofactor. Requires [4Fe-4S] cluster as cofactor.

The protein localises to the cytoplasm. It catalyses the reaction epoxyqueuosine(34) in tRNA + AH2 = queuosine(34) in tRNA + A + H2O. The protein operates within tRNA modification; tRNA-queuosine biosynthesis. In terms of biological role, catalyzes the conversion of epoxyqueuosine (oQ) to queuosine (Q), which is a hypermodified base found in the wobble positions of tRNA(Asp), tRNA(Asn), tRNA(His) and tRNA(Tyr). This is Epoxyqueuosine reductase from Leadbetterella byssophila (strain DSM 17132 / JCM 16389 / KACC 11308 / NBRC 106382 / 4M15).